The following is a 293-amino-acid chain: 2-pyrone-4,6-dicarboxylate hydrolase (293 aa).

Residues 1–20 (MTNDERILSWNETPSKPRYT) form a disordered region. Residues 29-31 (HCH), tyrosine 47, serine 75, arginine 122, arginine 128, tyrosine 154, and histidine 178 each bind substrate. Aspartate 246 acts as the Proton acceptor in catalysis. Asparagine 251 provides a ligand contact to substrate.

The protein belongs to the metallo-dependent hydrolases superfamily. PDC hydrolase family. In terms of assembly, monomer.

It catalyses the reaction 2-oxo-2H-pyran-4,6-dicarboxylate + H2O = (1E)-4-oxobut-1-ene-1,2,4-tricarboxylate + H(+). The protein operates within secondary metabolite metabolism; lignin degradation. Strongly inhibited by 1 mM Zn(2+) ions. Also inhibited by pyridine-2,4-dicarboxylic acid, 5-hydroxyisophthalic acid and 5,5'-dithiobis(2-nitrobenzoic acid) (Ellman reagent). Functionally, contributes to the degradation of lignin at the level of the protocatechuate 4,5-cleavage pathway. Catalyzes the hydrolysis of 2-pyrone-4,6-dicarboxylate (PDC) to (4E)-oxalomesaconate (OMA). The keto form of OMA can tautomerize into the enol form, 4-carboxy-2-hydroxymuconate (CHM), under certain pH conditions. Also catalyzes the reverse reaction. Is essential for the growth of Sphingobium sp. SYK-6 on vanillate but is not responsible for the growth of this strain on syringate. This is 2-pyrone-4,6-dicarboxylate hydrolase from Sphingobium sp. (strain NBRC 103272 / SYK-6).